Here is a 571-residue protein sequence, read N- to C-terminus: Arginine--tRNA ligase (571 aa).

Residues 122-132 (PNIAKEMHVGH) carry the 'HIGH' region motif.

The protein belongs to the class-I aminoacyl-tRNA synthetase family. In terms of assembly, monomer.

It is found in the cytoplasm. It carries out the reaction tRNA(Arg) + L-arginine + ATP = L-arginyl-tRNA(Arg) + AMP + diphosphate. The protein is Arginine--tRNA ligase of Buchnera aphidicola subsp. Cinara cedri (strain Cc).